Here is a 274-residue protein sequence, read N- to C-terminus: Octanoyltransferase LipM (274 aa).

A BPL/LPL catalytic domain is found at 31–245 (GEVPPTLRLY…GFAEALGARL (215 aa)). Residue Cys-147 is the Acyl-thioester intermediate of the active site.

Belongs to the octanoyltransferase LipM family. Monomer.

It carries out the reaction octanoyl-[ACP] + L-lysyl-[protein] = N(6)-octanoyl-L-lysyl-[protein] + holo-[ACP] + H(+). It functions in the pathway protein modification; protein lipoylation via endogenous pathway; protein N(6)-(lipoyl)lysine from octanoyl-[acyl-carrier-protein]. Functionally, catalyzes the transfer of endogenously produced octanoic acid from octanoyl-acyl-carrier-protein onto the lipoyl domain of GcvH, an intermediate carrier during protein lipoylation. The protein is Octanoyltransferase LipM of Kyrpidia tusciae (strain DSM 2912 / NBRC 15312 / T2) (Bacillus tusciae).